The primary structure comprises 1290 residues: DNA-directed RNA polymerase subunit beta' (1290 aa).

Positions 68, 70, 83, and 86 each coordinate Zn(2+). Mg(2+) is bound by residues Asp530, Asp532, and Asp534. The Zn(2+) site is built by Cys909, Cys985, Cys992, and Cys995.

This sequence belongs to the RNA polymerase beta' chain family. The RNAP catalytic core consists of 2 alpha, 1 beta, 1 beta' and 1 omega subunit. When a sigma factor is associated with the core the holoenzyme is formed, which can initiate transcription. It depends on Mg(2+) as a cofactor. The cofactor is Zn(2+).

The enzyme catalyses RNA(n) + a ribonucleoside 5'-triphosphate = RNA(n+1) + diphosphate. DNA-dependent RNA polymerase catalyzes the transcription of DNA into RNA using the four ribonucleoside triphosphates as substrates. The polypeptide is DNA-directed RNA polymerase subunit beta' (Mycoplasma pneumoniae (strain ATCC 29342 / M129 / Subtype 1) (Mycoplasmoides pneumoniae)).